A 323-amino-acid polypeptide reads, in one-letter code: HPr kinase/phosphorylase (323 aa).

Active-site residues include His-146 and Lys-167. Residue 161–168 coordinates ATP; that stretch reads GESGLGKS. Mg(2+) is bound at residue Ser-168. Asp-185 acts as the Proton acceptor; for phosphorylation activity. Proton donor; for dephosphorylation activity in catalysis. An important for the catalytic mechanism of both phosphorylation and dephosphorylation region spans residues 209-218; that stretch reads LEVRGLGLLD. Glu-210 is a Mg(2+) binding site. The active site involves Arg-250. An important for the catalytic mechanism of dephosphorylation region spans residues 271-276; it reads QVAAGR.

This sequence belongs to the HPrK/P family. As to quaternary structure, homohexamer. Mg(2+) serves as cofactor.

The enzyme catalyses [HPr protein]-L-serine + ATP = [HPr protein]-O-phospho-L-serine + ADP + H(+). It carries out the reaction [HPr protein]-O-phospho-L-serine + phosphate + H(+) = [HPr protein]-L-serine + diphosphate. Functionally, catalyzes the ATP- as well as the pyrophosphate-dependent phosphorylation of a specific serine residue in HPr, a phosphocarrier protein of the phosphoenolpyruvate-dependent sugar phosphotransferase system (PTS). HprK/P also catalyzes the pyrophosphate-producing, inorganic phosphate-dependent dephosphorylation (phosphorolysis) of seryl-phosphorylated HPr (P-Ser-HPr). The protein is HPr kinase/phosphorylase of Cupriavidus metallidurans (strain ATCC 43123 / DSM 2839 / NBRC 102507 / CH34) (Ralstonia metallidurans).